The sequence spans 198 residues: ATP-dependent Clp protease proteolytic subunit 1 (198 aa).

The active-site Nucleophile is Ser98. Residue His123 is part of the active site.

The protein belongs to the peptidase S14 family. In terms of assembly, fourteen ClpP subunits assemble into 2 heptameric rings which stack back to back to give a disk-like structure with a central cavity, resembling the structure of eukaryotic proteasomes.

It localises to the cytoplasm. It carries out the reaction Hydrolysis of proteins to small peptides in the presence of ATP and magnesium. alpha-casein is the usual test substrate. In the absence of ATP, only oligopeptides shorter than five residues are hydrolyzed (such as succinyl-Leu-Tyr-|-NHMec, and Leu-Tyr-Leu-|-Tyr-Trp, in which cleavage of the -Tyr-|-Leu- and -Tyr-|-Trp bonds also occurs).. Functionally, cleaves peptides in various proteins in a process that requires ATP hydrolysis. Has a chymotrypsin-like activity. Plays a major role in the degradation of misfolded proteins. ClpXP1 is involved in the complete degradation of the Site-2 clipped anti-sigma-W factor RsiW. This results in the release of SigW and the transcription activation of the genes under the control of the sigma-W factor. The chain is ATP-dependent Clp protease proteolytic subunit 1 from Bacillus licheniformis (strain ATCC 14580 / DSM 13 / JCM 2505 / CCUG 7422 / NBRC 12200 / NCIMB 9375 / NCTC 10341 / NRRL NRS-1264 / Gibson 46).